Here is a 264-residue protein sequence, read N- to C-terminus: Thymidylate synthase (264 aa).

R21 is a dUMP binding site. Residue H51 coordinates (6R)-5,10-methylene-5,6,7,8-tetrahydrofolate. 126 to 127 (RR) is a dUMP binding site. Catalysis depends on C146, which acts as the Nucleophile. Residues 166 to 169 (RSAD), N177, and 207 to 209 (HLY) each bind dUMP. D169 provides a ligand contact to (6R)-5,10-methylene-5,6,7,8-tetrahydrofolate. A263 serves as a coordination point for (6R)-5,10-methylene-5,6,7,8-tetrahydrofolate.

This sequence belongs to the thymidylate synthase family. Bacterial-type ThyA subfamily. As to quaternary structure, homodimer.

Its subcellular location is the cytoplasm. It catalyses the reaction dUMP + (6R)-5,10-methylene-5,6,7,8-tetrahydrofolate = 7,8-dihydrofolate + dTMP. The protein operates within pyrimidine metabolism; dTTP biosynthesis. Functionally, catalyzes the reductive methylation of 2'-deoxyuridine-5'-monophosphate (dUMP) to 2'-deoxythymidine-5'-monophosphate (dTMP) while utilizing 5,10-methylenetetrahydrofolate (mTHF) as the methyl donor and reductant in the reaction, yielding dihydrofolate (DHF) as a by-product. This enzymatic reaction provides an intracellular de novo source of dTMP, an essential precursor for DNA biosynthesis. This Bartonella henselae (strain ATCC 49882 / DSM 28221 / CCUG 30454 / Houston 1) (Rochalimaea henselae) protein is Thymidylate synthase.